A 228-amino-acid chain; its full sequence is E3 ubiquitin-protein ligase RNF114 (228 aa).

Residues 29 to 68 form an RING-type zinc finger; sequence CPVCLEVYEKPVQVPCGHVFCSACLQECLKPKKPVCGVCR. Residues Cys-91 and Cys-94 each contribute to the Zn(2+) site. The C2HC RNF-type zinc-finger motif lies at 91 to 110; it reads CHGCRKKFFLSKIRSHVATC. Lys-102 is subject to N6-acetyllysine. 2 residues coordinate Zn(2+): His-106 and Cys-110. The residue at position 112 (Lys-112) is an N6-acetyllysine.

Interacts with XAF1, the interaction increases XAF1 stability and proapoptotic effects, and may regulate IFN signaling. Post-translationally, autoubiquitinated. Polyubiquitinated in the presence of E2 enzymes UBE2D1, UBE2D2 and UBE2D3, but only monoubiquitinated in the presence of UBE2E1.

The protein resides in the cytoplasm. It localises to the nucleus. It catalyses the reaction S-ubiquitinyl-[E2 ubiquitin-conjugating enzyme]-L-cysteine + [acceptor protein]-L-lysine = [E2 ubiquitin-conjugating enzyme]-L-cysteine + N(6)-ubiquitinyl-[acceptor protein]-L-lysine.. It participates in protein modification; protein ubiquitination. E3 ubiquitin-protein ligase that promotes the ubiquitination of various substrates. In turn, participates in the regulation of many biological processes including cell cycle, apoptosis, osteoclastogenesis as well as innate or adaptive immunity. Acts as negative regulator of NF-kappa-B-dependent transcription by promoting the ubiquitination and stabilization of the NF-kappa-B inhibitor TNFAIP3. May promote the ubiquitination of TRAF6 as well. Also acts as a negative regulator of T-cell activation. Inhibits cellular dsRNA responses and interferon production by targeting MAVS component for proteasomal degradation. Ubiquitinates the CDK inhibitor CDKN1A leading to its degradationand probably also CDKN1B and CDKN1C. This activity stimulates cell cycle G1-to-S phase transition and suppresses cellular senescence. May play a role in spermatogenesis. This Pan troglodytes (Chimpanzee) protein is E3 ubiquitin-protein ligase RNF114 (RNF114).